The sequence spans 277 residues: Large ribosomal subunit protein uL2 (277 aa).

Disordered regions lie at residues 24–55 (ITTS…RHHG) and 221–277 (RGSV…RKKK).

The protein belongs to the universal ribosomal protein uL2 family. As to quaternary structure, part of the 50S ribosomal subunit. Forms a bridge to the 30S subunit in the 70S ribosome.

Functionally, one of the primary rRNA binding proteins. Required for association of the 30S and 50S subunits to form the 70S ribosome, for tRNA binding and peptide bond formation. It has been suggested to have peptidyltransferase activity; this is somewhat controversial. Makes several contacts with the 16S rRNA in the 70S ribosome. In Listeria welshimeri serovar 6b (strain ATCC 35897 / DSM 20650 / CCUG 15529 / CIP 8149 / NCTC 11857 / SLCC 5334 / V8), this protein is Large ribosomal subunit protein uL2.